Here is a 154-residue protein sequence, read N- to C-terminus: Myoglobin (154 aa).

In terms of domain architecture, Globin spans 2 to 148 (GLSDGEWQLV…FRNDMATKYK (147 aa)). S4 carries the post-translational modification Phosphoserine. Residue H65 participates in nitrite binding. H65 contributes to the O2 binding site. H94 contacts heme b.

It belongs to the globin family. In terms of assembly, monomeric.

It localises to the cytoplasm. It is found in the sarcoplasm. The catalysed reaction is Fe(III)-heme b-[protein] + nitric oxide + H2O = Fe(II)-heme b-[protein] + nitrite + 2 H(+). It carries out the reaction H2O2 + AH2 = A + 2 H2O. Functionally, monomeric heme protein which primary function is to store oxygen and facilitate its diffusion within muscle tissues. Reversibly binds oxygen through a pentacoordinated heme iron and enables its timely and efficient release as needed during periods of heightened demand. Depending on the oxidative conditions of tissues and cells, and in addition to its ability to bind oxygen, it also has a nitrite reductase activity whereby it regulates the production of bioactive nitric oxide. Under stress conditions, like hypoxia and anoxia, it also protects cells against reactive oxygen species thanks to its pseudoperoxidase activity. The chain is Myoglobin (MB) from Tachyglossus aculeatus aculeatus (Southeast Australian short-beaked echidna).